A 793-amino-acid polypeptide reads, in one-letter code: Nuclear cap-binding protein subunit 1 (793 aa).

In terms of domain architecture, MIF4G spans 28 to 242; sequence EKKLQEVIGK…SLSAQIENLR (215 aa).

The protein belongs to the NCBP1 family. In terms of assembly, component of the nuclear cap-binding complex (CBC), a heterodimer composed of ncbp-1 and ncbp-1 that interacts with m7GpppG-capped RNA.

The protein localises to the nucleus. Its function is as follows. Component of the cap-binding complex (CBC), which binds cotranscriptionally to the 5'-cap of pre-mRNAs and is involved in various processes such as pre-mRNA splicing and RNA-mediated gene silencing (RNAi). The CBC complex is involved in miRNA-mediated RNA interference and is required for primary microRNAs (miRNAs) processing. In the CBC complex, ncbp-1 does not bind directly capped RNAs (m7GpppG-capped RNA) but is required to stabilize the movement of the N-terminal loop of ncbp-2 and lock the CBC into a high affinity cap-binding state with the cap structure. The protein is Nuclear cap-binding protein subunit 1 (ncbp-1) of Caenorhabditis briggsae.